Here is a 541-residue protein sequence, read N- to C-terminus: Chaperonin GroEL (541 aa).

ATP-binding positions include 29–32 (TIGP), 86–90 (DGTTT), G413, and D494.

This sequence belongs to the chaperonin (HSP60) family. In terms of assembly, forms a cylinder of 14 subunits composed of two heptameric rings stacked back-to-back. Interacts with the co-chaperonin GroES.

The protein resides in the cytoplasm. The catalysed reaction is ATP + H2O + a folded polypeptide = ADP + phosphate + an unfolded polypeptide.. Its function is as follows. Together with its co-chaperonin GroES, plays an essential role in assisting protein folding. The GroEL-GroES system forms a nano-cage that allows encapsulation of the non-native substrate proteins and provides a physical environment optimized to promote and accelerate protein folding. This is Chaperonin GroEL from Lachnospira eligens (strain ATCC 27750 / DSM 3376 / VPI C15-48 / C15-B4) (Eubacterium eligens).